Consider the following 257-residue polypeptide: Hydroxyacylglutathione hydrolase (257 aa).

Positions 54, 56, 58, 59, 113, 137, and 175 each coordinate Zn(2+).

Belongs to the metallo-beta-lactamase superfamily. Glyoxalase II family. As to quaternary structure, monomer. It depends on Zn(2+) as a cofactor.

It carries out the reaction an S-(2-hydroxyacyl)glutathione + H2O = a 2-hydroxy carboxylate + glutathione + H(+). It participates in secondary metabolite metabolism; methylglyoxal degradation; (R)-lactate from methylglyoxal: step 2/2. Thiolesterase that catalyzes the hydrolysis of S-D-lactoyl-glutathione to form glutathione and D-lactic acid. The chain is Hydroxyacylglutathione hydrolase from Rippkaea orientalis (strain PCC 8801 / RF-1) (Cyanothece sp. (strain PCC 8801)).